A 256-amino-acid chain; its full sequence is Deoxyribose-phosphate aldolase (256 aa).

The Proton donor/acceptor role is filled by Asp102. Lys165 acts as the Schiff-base intermediate with acetaldehyde in catalysis. Lys197 acts as the Proton donor/acceptor in catalysis.

Belongs to the DeoC/FbaB aldolase family. DeoC type 2 subfamily.

Its subcellular location is the cytoplasm. The catalysed reaction is 2-deoxy-D-ribose 5-phosphate = D-glyceraldehyde 3-phosphate + acetaldehyde. It participates in carbohydrate degradation; 2-deoxy-D-ribose 1-phosphate degradation; D-glyceraldehyde 3-phosphate and acetaldehyde from 2-deoxy-alpha-D-ribose 1-phosphate: step 2/2. Its function is as follows. Catalyzes a reversible aldol reaction between acetaldehyde and D-glyceraldehyde 3-phosphate to generate 2-deoxy-D-ribose 5-phosphate. The chain is Deoxyribose-phosphate aldolase from Shewanella sp. (strain W3-18-1).